The primary structure comprises 78 residues: uncharacterized protein (78 aa).

The helical transmembrane segment at 21-43 (SPFLFGAPLVGGLLGGFLGSALF) threads the bilayer.

It localises to the membrane. This is an uncharacterized protein from Bacillus subtilis (strain 168).